We begin with the raw amino-acid sequence, 177 residues long: Small ribosomal subunit protein uS13 (177 aa).

A compositionally biased stretch (basic residues) spans 132 to 145 (GVRHKRGQKVRGQR). The disordered stretch occupies residues 132–177 (GVRHKRGQKVRGQRTKSTGRTEGTIGVNVEAIKEEQAEDAAAEDDE). Residues 167–177 (QAEDAAAEDDE) are compositionally biased toward acidic residues.

The protein belongs to the universal ribosomal protein uS13 family. Part of the 30S ribosomal subunit. Forms a loose heterodimer with protein S19. Forms two bridges to the 50S subunit in the 70S ribosome.

Functionally, located at the top of the head of the 30S subunit, it contacts several helices of the 16S rRNA. In the 70S ribosome it contacts the 23S rRNA (bridge B1a) and protein L5 of the 50S subunit (bridge B1b), connecting the 2 subunits; these bridges are implicated in subunit movement. The sequence is that of Small ribosomal subunit protein uS13 from Haloarcula marismortui (strain ATCC 43049 / DSM 3752 / JCM 8966 / VKM B-1809) (Halobacterium marismortui).